We begin with the raw amino-acid sequence, 325 residues long: MSWLTPEIIDVLIAVLKAVVILVVVVVCGALMSFGERRLLGLFQNRYGPNRVGWGGSLQIVADMIKMFFKEDWVPRFADRMIFTLAPVIGFVSLLLAFAIVPITPTWMAADLNIGILFFMMMAGLAVYAVLFAGWSSNNKYSLLGAMRASAQTLSYEVFIGLSFMGVVAQADSFNMVDIVNAQEHMWNVIPQFFGFLTFAIAGVAVCHRHPFDQPEAEQELADGYHIEYSGMKFGLFFVGEYIGIVTVSALIVTMFFGGWHGPFLPPFVWFALKTAFFMVMFILIRASLPRPRYDQVMAFGWKICLPLTLLNLLATAAVILYNAQ.

A run of 8 helical transmembrane segments spans residues 11–31 (VLIAVLKAVVILVVVVVCGAL), 81–101 (MIFTLAPVIGFVSLLLAFAIV), 114–134 (IGILFFMMMAGLAVYAVLFAG), 149–169 (ASAQTLSYEVFIGLSFMGVVA), 186–206 (MWNVIPQFFGFLTFAIAGVAV), 237–257 (FFVGEYIGIVTVSALIVTMFF), 265–285 (LPPFVWFALKTAFFMVMFILI), and 304–324 (ICLPLTLLNLLATAAVILYNA).

The protein belongs to the complex I subunit 1 family. NDH-1 is composed of 13 different subunits. Subunits NuoA, H, J, K, L, M, N constitute the membrane sector of the complex.

It is found in the cell inner membrane. The catalysed reaction is a quinone + NADH + 5 H(+)(in) = a quinol + NAD(+) + 4 H(+)(out). NDH-1 shuttles electrons from NADH, via FMN and iron-sulfur (Fe-S) centers, to quinones in the respiratory chain. The immediate electron acceptor for the enzyme in this species is believed to be ubiquinone. Couples the redox reaction to proton translocation (for every two electrons transferred, four hydrogen ions are translocated across the cytoplasmic membrane), and thus conserves the redox energy in a proton gradient. This subunit may bind ubiquinone. The chain is NADH-quinone oxidoreductase subunit H from Photorhabdus laumondii subsp. laumondii (strain DSM 15139 / CIP 105565 / TT01) (Photorhabdus luminescens subsp. laumondii).